The primary structure comprises 291 residues: 4-hydroxy-tetrahydrodipicolinate synthase (291 aa).

Thr44 provides a ligand contact to pyruvate. Tyr132 functions as the Proton donor/acceptor in the catalytic mechanism. The active-site Schiff-base intermediate with substrate is the Lys161. Position 202 (Ile202) interacts with pyruvate.

Belongs to the DapA family. As to quaternary structure, homotetramer; dimer of dimers.

Its subcellular location is the cytoplasm. The enzyme catalyses L-aspartate 4-semialdehyde + pyruvate = (2S,4S)-4-hydroxy-2,3,4,5-tetrahydrodipicolinate + H2O + H(+). It functions in the pathway amino-acid biosynthesis; L-lysine biosynthesis via DAP pathway; (S)-tetrahydrodipicolinate from L-aspartate: step 3/4. Functionally, catalyzes the condensation of (S)-aspartate-beta-semialdehyde [(S)-ASA] and pyruvate to 4-hydroxy-tetrahydrodipicolinate (HTPA). In Endomicrobium trichonymphae, this protein is 4-hydroxy-tetrahydrodipicolinate synthase.